A 541-amino-acid chain; its full sequence is Arginine--tRNA ligase (541 aa).

The short motif at 119–129 is the 'HIGH' region element; sequence ANPTGPLHIGH.

The protein belongs to the class-I aminoacyl-tRNA synthetase family. As to quaternary structure, monomer.

Its subcellular location is the cytoplasm. The enzyme catalyses tRNA(Arg) + L-arginine + ATP = L-arginyl-tRNA(Arg) + AMP + diphosphate. In Helicobacter pylori (strain P12), this protein is Arginine--tRNA ligase.